Consider the following 214-residue polypeptide: C-type lectin domain family 4 member E (214 aa).

Residues 1–22 (MNSTKSPASHHTERGCFKNSQV) lie on the Cytoplasmic side of the membrane. Residues 23–45 (LSWTIAGASILFLSGCFITRCVV) traverse the membrane as a helical; Signal-anchor for type II membrane protein segment. At 46–214 (TYRSSQISGQ…CEMPEISPLD (169 aa)) the chain is on the extracellular side. C80 and C91 are oxidised to a cystine. In terms of domain architecture, C-type lectin spans 87 to 206 (YQSSCYFFST…CFYSMPWICE (120 aa)). N107 is a glycosylation site (N-linked (GlcNAc...) asparagine). 2 disulfide bridges follow: C108-C205 and C179-C197. Ca(2+) is bound by residues V117, E123, E169, N171, N193, D194, and E206. The Confers specificity for glucose/mannose-type carbohydrates motif lies at 169 to 171 (EPN).

In terms of assembly, monomer and homodimer. Interacts with signaling adapter Fc receptor gamma chain/FCER1G to form a functional complex; the interaction is direct. Alternatively, acts as a bridge for interaction between CLEC4D and FCER1G. A heterodimer of CLEC4E and CLEC4D associates with FCER1G to form a functional complex. Interacts with SAP130 nuclear protein that is released from necrotic cells; the interaction is direct. In terms of tissue distribution, highly expressed in macrophages in response to stimulation with bacterial glycolipids and pro-inflammatory cytokines. Expressed in dendritic cells (at protein level) in response to stimulation with mycobacterial trehalose 6,6'-dimycolate (TDM).

The protein resides in the cell membrane. The protein localises to the cell projection. It is found in the phagocytic cup. Its function is as follows. Calcium-dependent lectin that acts as a pattern recognition receptor (PRR) of the innate immune system: recognizes damage-associated molecular patterns (DAMPs) of abnormal self and pathogen-associated molecular patterns (PAMPs) of bacteria and fungi. The PAMPs notably include mycobacterial trehalose 6,6'-dimycolate (TDM), a cell wall glycolipid with potent adjuvant immunomodulatory functions. Interacts with signaling adapter Fc receptor gamma chain/FCER1G to form a functional complex in myeloid cells. Binding of mycobacterial trehalose 6,6'-dimycolate (TDM) to this receptor complex leads to phosphorylation of the immunoreceptor tyrosine-based activation motif (ITAM) of FCER1G, triggering activation of SYK, CARD9 and NF-kappa-B, consequently driving maturation of antigen-presenting cells and shaping antigen-specific priming of T-cells toward effector T-helper 1 (Th1) and T-helper 17 (Th17) cell subtypes. Also recognizes alpha-mannose residues on pathogenic fungi of the genus Malassezia and mediates macrophage activation. Through recognition of DAMPs released upon nonhomeostatic cell death, enables immune sensing of damaged self and promotes inflammatory cell infiltration into the damaged tissue. The chain is C-type lectin domain family 4 member E from Mus musculus (Mouse).